We begin with the raw amino-acid sequence, 271 residues long: 3-methyl-2-oxobutanoate hydroxymethyltransferase (271 aa).

The Mg(2+) site is built by D49 and D88. 3-methyl-2-oxobutanoate is bound by residues 49-50 (DS), D88, and K118. Residue E120 participates in Mg(2+) binding. E187 functions as the Proton acceptor in the catalytic mechanism.

This sequence belongs to the PanB family. As to quaternary structure, homodecamer; pentamer of dimers. Requires Mg(2+) as cofactor.

The protein resides in the cytoplasm. It carries out the reaction 3-methyl-2-oxobutanoate + (6R)-5,10-methylene-5,6,7,8-tetrahydrofolate + H2O = 2-dehydropantoate + (6S)-5,6,7,8-tetrahydrofolate. It functions in the pathway cofactor biosynthesis; (R)-pantothenate biosynthesis; (R)-pantoate from 3-methyl-2-oxobutanoate: step 1/2. Its function is as follows. Catalyzes the reversible reaction in which hydroxymethyl group from 5,10-methylenetetrahydrofolate is transferred onto alpha-ketoisovalerate to form ketopantoate. In Bartonella bacilliformis (strain ATCC 35685 / KC583 / Herrer 020/F12,63), this protein is 3-methyl-2-oxobutanoate hydroxymethyltransferase.